A 51-amino-acid polypeptide reads, in one-letter code: Non-specific lipid-transfer protein (51 aa).

The protein belongs to the plant LTP family.

Plant non-specific lipid-transfer proteins transfer phospholipids as well as galactolipids across membranes. May play a role in wax or cutin deposition in the cell walls of expanding epidermal cells and certain secretory tissues. The sequence is that of Non-specific lipid-transfer protein from Lycium barbarum (Barbary matrimony-vine).